A 131-amino-acid chain; its full sequence is Small ribosomal subunit protein uS8 (131 aa).

Belongs to the universal ribosomal protein uS8 family. In terms of assembly, part of the 30S ribosomal subunit. Contacts proteins S5 and S12.

Functionally, one of the primary rRNA binding proteins, it binds directly to 16S rRNA central domain where it helps coordinate assembly of the platform of the 30S subunit. The sequence is that of Small ribosomal subunit protein uS8 from Chlorobium chlorochromatii (strain CaD3).